A 261-amino-acid chain; its full sequence is MEENDHSNRDVERQDSGDESNRAILPLLQAPGNVLPHRITNFYIDNILRPDFGRRKEGSRRDEINIVERENRCPSAPGSGQVAPVSGEGTSSPRAVNASKKTDISTDESLKSRAETGDQCLSSDSDCSQRCAAQAKQPMLWPAWVYCTRYSDRPSSGPRSRKPKKKTPTKEDKRPRTAFTAEQLQRLKNEFQNNRYLTEQRRQALAQELGLNESQIKIWFQNKRAKIKKATGNKNTLAVHLMAQGLYNHATVTKDDKSDSD.

3 stretches are compositionally biased toward basic and acidic residues: residues 1–21 (MEENDHSNRDVERQDSGDESN), 53–72 (GRRKEGSRRDEINIVERENR), and 100–116 (KKTDISTDESLKSRAET). 3 disordered regions span residues 1-24 (MEENDHSNRDVERQDSGDESNRAI), 53-125 (GRRK…SSDS), and 152-176 (DRPSSGPRSRKPKKKTPTKEDKRPR). Residues 172-231 (DKRPRTAFTAEQLQRLKNEFQNNRYLTEQRRQALAQELGLNESQIKIWFQNKRAKIKKAT) constitute a DNA-binding region (homeobox).

It belongs to the engrailed homeobox family.

It is found in the nucleus. This Danio rerio (Zebrafish) protein is Homeobox protein engrailed-2b (eng2b).